The following is a 108-amino-acid chain: MNLKSIIFVLFIAFFAFSLANDDDPTCPNGFICFWVGQNYTGDQWKWTPRMNYRDLPRQYHNNVGSYVAKTNACFKNWIPYLTFECNEGDSSHSFTFGKIIDGVSHEC.

An N-terminal signal peptide occupies residues 1 to 20 (MNLKSIIFVLFIAFFAFSLA). The N-linked (GlcNAc...) asparagine glycan is linked to Asn-39.

The protein belongs to the Dictyostelium gerABC family.

The protein resides in the secreted. This is an uncharacterized protein from Dictyostelium discoideum (Social amoeba).